A 334-amino-acid polypeptide reads, in one-letter code: uncharacterized protein (334 aa).

A run of 2 helical transmembrane segments spans residues 1 to 21 and 46 to 66; these read MFRL…FTFI and ILGL…IIII.

It is found in the cell membrane. This is an uncharacterized protein from Rickettsia prowazekii (strain Madrid E).